The following is a 393-amino-acid chain: O-phospho-L-seryl-tRNA:Cys-tRNA synthase 1 (393 aa).

Pyridoxal 5'-phosphate is bound by residues Ala85–Arg86, Asn190, and Ser213–His215. Lys216 carries the post-translational modification N6-(pyridoxal phosphate)lysine.

It belongs to the SepCysS family. Homodimer. Interacts with SepRS. Requires pyridoxal 5'-phosphate as cofactor.

It catalyses the reaction O-phospho-L-seryl-tRNA(Cys) + hydrogen sulfide + H(+) = L-cysteinyl-tRNA(Cys) + phosphate. In terms of biological role, converts O-phospho-L-seryl-tRNA(Cys) (Sep-tRNA(Cys)) to L-cysteinyl-tRNA(Cys) (Cys-tRNA(Cys)). This is O-phospho-L-seryl-tRNA:Cys-tRNA synthase 1 from Methanospirillum hungatei JF-1 (strain ATCC 27890 / DSM 864 / NBRC 100397 / JF-1).